The following is a 180-amino-acid chain: Adenine phosphoribosyltransferase (180 aa).

A2 is modified (N-acetylalanine). Phosphoserine is present on residues S15 and S30. At Y60 the chain carries Phosphotyrosine. S66 carries the phosphoserine modification. T135 carries the phosphothreonine modification.

Belongs to the purine/pyrimidine phosphoribosyltransferase family. Homodimer.

It is found in the cytoplasm. The catalysed reaction is AMP + diphosphate = 5-phospho-alpha-D-ribose 1-diphosphate + adenine. It participates in purine metabolism; AMP biosynthesis via salvage pathway; AMP from adenine: step 1/1. In terms of biological role, catalyzes a salvage reaction resulting in the formation of AMP, that is energically less costly than de novo synthesis. In Bos taurus (Bovine), this protein is Adenine phosphoribosyltransferase.